Reading from the N-terminus, the 575-residue chain is Arginine--tRNA ligase (575 aa).

The 'HIGH' region signature appears at 130 to 140 (ANPTGPMHVGH).

It belongs to the class-I aminoacyl-tRNA synthetase family. Monomer.

Its subcellular location is the cytoplasm. The catalysed reaction is tRNA(Arg) + L-arginine + ATP = L-arginyl-tRNA(Arg) + AMP + diphosphate. This chain is Arginine--tRNA ligase, found in Magnetococcus marinus (strain ATCC BAA-1437 / JCM 17883 / MC-1).